The primary structure comprises 205 residues: Large ribosomal subunit protein uL4 (205 aa).

This sequence belongs to the universal ribosomal protein uL4 family. Part of the 50S ribosomal subunit.

Functionally, one of the primary rRNA binding proteins, this protein initially binds near the 5'-end of the 23S rRNA. It is important during the early stages of 50S assembly. It makes multiple contacts with different domains of the 23S rRNA in the assembled 50S subunit and ribosome. In terms of biological role, forms part of the polypeptide exit tunnel. The polypeptide is Large ribosomal subunit protein uL4 (Dinoroseobacter shibae (strain DSM 16493 / NCIMB 14021 / DFL 12)).